A 126-amino-acid polypeptide reads, in one-letter code: Glycine cleavage system H protein (126 aa).

Residues 22–104 (TVTIGITEYA…YEKAWMVKVE (83 aa)) form the Lipoyl-binding domain. N6-lipoyllysine is present on Lys-63.

Belongs to the GcvH family. As to quaternary structure, the glycine cleavage system is composed of four proteins: P, T, L and H. Requires (R)-lipoate as cofactor.

In terms of biological role, the glycine cleavage system catalyzes the degradation of glycine. The H protein shuttles the methylamine group of glycine from the P protein to the T protein. Functionally, is also involved in protein lipoylation via its role as an octanoyl/lipoyl carrier protein intermediate. The protein is Glycine cleavage system H protein of Staphylococcus haemolyticus (strain JCSC1435).